Here is a 429-residue protein sequence, read N- to C-terminus: MGKNVVVLGSQWGDEGKGKIVDLLTEKASAVARFQGGHNAGHTLVVDGKTTVLHLIPSGILREGVTCFIGNGVVLAPDALLKEMKGLEENGVPVRERLRISPNCPLIMPYHVALDQAREAKRGSGKIGTTGRGIGPAYEDKVARRAIKLADLFRDDLEEKLRNLIEYHNFQLTQYYKVEAIDFDETLKLCKEWKEEIRGMVTDVTEDLNQLRLAGKNLMFEGAQGTLLDIDHGTYPFVTSSSVTAGGVSTGTGIGPLYLDYVLGITKAYTTRVGSGPFPTELFDDVGAHLAKVGHEFGATTGRARRCGWFDAEALRRAVVLNSMSGICLTKLDVLDGLEELLIGVGYNLPETECAGAHDAEFYEAVTPKYETLQGWSESTVGITNYDELPENAKIYIKRIEALIGCPVDIISTGPDREETIVLRDPYDA.

GTP-binding positions include 13-19 and 41-43; these read GDEGKGK and GHT. The active-site Proton acceptor is Asp14. Mg(2+)-binding residues include Asp14 and Gly41. Residues 14–17, 39–42, Thr130, Arg144, Gln224, Thr239, and Arg303 each bind IMP; these read DEGK and NAGH. Catalysis depends on His42, which acts as the Proton donor. 299–305 is a binding site for substrate; sequence ATTGRAR. GTP-binding positions include Arg305, 331 to 333, and 412 to 414; these read KLD and STG.

The protein belongs to the adenylosuccinate synthetase family. Homodimer. The cofactor is Mg(2+).

It is found in the cytoplasm. The enzyme catalyses IMP + L-aspartate + GTP = N(6)-(1,2-dicarboxyethyl)-AMP + GDP + phosphate + 2 H(+). The protein operates within purine metabolism; AMP biosynthesis via de novo pathway; AMP from IMP: step 1/2. Its function is as follows. Plays an important role in the de novo pathway of purine nucleotide biosynthesis. Catalyzes the first committed step in the biosynthesis of AMP from IMP. This is Adenylosuccinate synthetase from Psychrobacter cryohalolentis (strain ATCC BAA-1226 / DSM 17306 / VKM B-2378 / K5).